The following is a 137-amino-acid chain: Bombinin-like peptides 2 (137 aa).

The first 18 residues, 1 to 18 (MNFKYIVAVSILIASAYA), serve as a signal peptide directing secretion. Position 70 is an asparagine amide (N70). Residues 92–112 (DSLEHPEEASEKETRGFNQEE) are disordered. I136 bears the Isoleucine amide mark.

Belongs to the bombinin family. Expressed by the skin glands.

The protein localises to the secreted. Functionally, bombinin-like peptide 2 has antimicrobial activity, but no hemolytic activity. Preliminary evidence indicates that this peptide does not lyse and thus kill the bacteria by its antimicrobial activity. In terms of biological role, bombinin H2 has antibacterial and hemolytic activity. This chain is Bombinin-like peptides 2, found in Bombina variegata (Yellow-bellied toad).